The primary structure comprises 344 residues: Transcription factor AIG1 (344 aa).

The region spanning 131–180 is the bHLH domain; sequence AASKSHSEAERRRRERINTHLAKLRSILPNTTKTDKASLLAEVIQHMKEL. The tract at residues 313–344 is disordered; the sequence is NDESNDNNNLEKSSSGGIKRQRTSKMVNRCYN. Over residues 318–327 the composition is skewed to low complexity; it reads DNNNLEKSSS.

As to quaternary structure, homodimer. Interacts with LHW.

It is found in the nucleus. Functionally, transcription factor required for MONOPTEROS-dependent root initiation in embryo. Transcriptionally controlled by MONOPTEROS. This chain is Transcription factor AIG1 (BHLH32), found in Arabidopsis thaliana (Mouse-ear cress).